Consider the following 454-residue polypeptide: Exopolyphosphatase PRUNE1 (454 aa).

At M1 the chain carries N-acetylmethionine. Mn(2+)-binding residues include D28, D30, D106, and D179. A DHH motif motif is present at residues 106–108 (DHH). An essential for homodimerization region spans residues 394 to 421 (SLIAGLSQDDEDPPLPPTPMNSLVDECP). The interval 398-421 (GLSQDDEDPPLPPTPMNSLVDECP) is disordered. A Phosphoserine modification is found at S400. T411 carries the phosphothreonine modification. Residue S415 is modified to Phosphoserine.

The protein belongs to the PPase class C family. Prune subfamily. In terms of assembly, homooligomer. Able to homodimerize via its C-terminal domain. Interacts with NME1. Interacts with GSK3; at focal adhesion complexes where paxillin and vinculin are colocalized. Interacts with alpha and beta tubulin. Mn(2+) is required as a cofactor.

It localises to the cytoplasm. The protein resides in the nucleus. It is found in the cell junction. Its subcellular location is the focal adhesion. The enzyme catalyses diphosphate + H2O = 2 phosphate + H(+). Its activity is regulated as follows. Activated by magnesium ions and inhibited by manganese ions. Inhibited by dipyridamole, moderately sensitive to IBMX and inhibited by vinpocetine. Its function is as follows. Phosphodiesterase (PDE) that has higher activity toward cAMP than cGMP, as substrate. Plays a role in cell proliferation, migration and differentiation, and acts as a negative regulator of NME1. Plays a role in the regulation of neurogenesis. Involved in the regulation of microtubule polymerization. In Rattus norvegicus (Rat), this protein is Exopolyphosphatase PRUNE1 (Prune1).